The sequence spans 314 residues: Methionyl-tRNA formyltransferase (314 aa).

113-116 (SLLP) is a (6S)-5,6,7,8-tetrahydrofolate binding site.

It belongs to the Fmt family.

The enzyme catalyses L-methionyl-tRNA(fMet) + (6R)-10-formyltetrahydrofolate = N-formyl-L-methionyl-tRNA(fMet) + (6S)-5,6,7,8-tetrahydrofolate + H(+). Attaches a formyl group to the free amino group of methionyl-tRNA(fMet). The formyl group appears to play a dual role in the initiator identity of N-formylmethionyl-tRNA by promoting its recognition by IF2 and preventing the misappropriation of this tRNA by the elongation apparatus. This Pseudomonas aeruginosa (strain LESB58) protein is Methionyl-tRNA formyltransferase.